The chain runs to 689 residues: uncharacterized protein (689 aa).

Composition is skewed to low complexity over residues 347-359 (RPPSGSGEAAGEP) and 370-388 (ASTASATAATSTRGPTRPT). Residues 347 to 689 (RPPSGSGEAA…KSQPPAAHTA (343 aa)) form a disordered region. Over residues 405–480 (ARPESEEQTD…QESQVARRDE (76 aa)) the composition is skewed to basic and acidic residues. Composition is skewed to pro residues over residues 515–539 (VPGPDPRLWVPPPHLLFPSPLPPMT) and 550–569 (RCPPGPAEEPPTCRPRPPRP). 2 stretches are compositionally biased toward low complexity: residues 570–581 (SSDTPLSAVSRP) and 591–610 (TARVRFFLSSSSSSPSYSPA). Residues 611–620 (PLSPPSPVSP) show a composition bias toward pro residues. Positions 666-676 (SVPSSASPSAS) are enriched in low complexity.

This is an uncharacterized protein from Homo sapiens (Human).